Here is a 266-residue protein sequence, read N- to C-terminus: Apolipoprotein A-I (266 aa).

The signal sequence occupies residues 1 to 18; sequence MKAVVLTLAVLFLTGSQA. A run of 2 repeats spans residues 67-88 and 89-110. The segment at 67-266 is 10 X approximate tandem repeats; the sequence is LKLLDNWDSL…DEAAKKLNTQ (200 aa). Methionine 109 carries the post-translational modification Methionine sulfoxide. One copy of the 3; half-length repeat lies at 111–121; that stretch reads KDLEEVKQKVQ. Repeat copies occupy residues 122–143, 144–165, 166–187, 188–209, and 210–231. One copy of the 9; half-length repeat lies at 232 to 242; it reads PALEDLRQGLL. The stretch at 243–266 is repeat 10; it reads PVLESFKVSLLAAVDEAAKKLNTQ.

Belongs to the apolipoprotein A1/A4/E family. As to quaternary structure, homodimer. Interacts with APOA1BP and CLU. Component of a sperm activating protein complex (SPAP), consisting of APOA1, an immunoglobulin heavy chain, an immunoglobulin light chain and albumin. Interacts with NDRG1. Interacts with SCGB3A2. Interacts with NAXE and YJEFN3. Post-translationally, glycosylated. In terms of processing, palmitoylated. Phosphorylation sites are present in the extracellular medium.

It is found in the secreted. In terms of biological role, participates in the reverse transport of cholesterol from tissues to the liver for excretion by promoting cholesterol efflux from tissues and by acting as a cofactor for the lecithin cholesterol acyltransferase (LCAT). As part of the SPAP complex, activates spermatozoa motility. This chain is Apolipoprotein A-I (APOA1), found in Mustela putorius furo (European domestic ferret).